Consider the following 257-residue polypeptide: UPF0246 protein YaaA (257 aa).

Belongs to the UPF0246 family.

In Salmonella schwarzengrund (strain CVM19633), this protein is UPF0246 protein YaaA.